Reading from the N-terminus, the 210-residue chain is MIKQPALAQEQYACVYAWLALLFFREVDDEGLIQLQSAEIADWLALLKRQPALAASVALLEQKIAALSLRQDAQLELAADFCGLFLMTDKKSALPYASQYPQQEPGMIKHLLLEAGMEVNDDFKEPADHLAIYLELLSHLHFSLGESFQQRRMNKLRQKTLSSLLEWLPEFTNNCLKHDSYGFYAALSQLLLAIVLFDDGKEDLSIVAAE.

It belongs to the TorD/DmsD family. TorD subfamily.

It localises to the cytoplasm. Its function is as follows. Involved in the biogenesis of TorA. Acts on TorA before the insertion of the molybdenum cofactor and, as a result, probably favors a conformation of the apoenzyme that is competent for acquiring the cofactor. This Salmonella agona (strain SL483) protein is Chaperone protein TorD.